Reading from the N-terminus, the 183-residue chain is Large ribosomal subunit protein uL5 (183 aa).

It belongs to the universal ribosomal protein uL5 family. As to quaternary structure, part of the 50S ribosomal subunit; part of the 5S rRNA/L5/L18/L25 subcomplex. Contacts the 5S rRNA and the P site tRNA. Forms a bridge to the 30S subunit in the 70S ribosome.

In terms of biological role, this is one of the proteins that bind and probably mediate the attachment of the 5S RNA into the large ribosomal subunit, where it forms part of the central protuberance. In the 70S ribosome it contacts protein S13 of the 30S subunit (bridge B1b), connecting the 2 subunits; this bridge is implicated in subunit movement. Contacts the P site tRNA; the 5S rRNA and some of its associated proteins might help stabilize positioning of ribosome-bound tRNAs. This is Large ribosomal subunit protein uL5 from Flavobacterium johnsoniae (strain ATCC 17061 / DSM 2064 / JCM 8514 / BCRC 14874 / CCUG 350202 / NBRC 14942 / NCIMB 11054 / UW101) (Cytophaga johnsonae).